A 266-amino-acid chain; its full sequence is 3-methyl-2-oxobutanoate hydroxymethyltransferase (266 aa).

2 residues coordinate Mg(2+): Asp-45 and Asp-84. 3-methyl-2-oxobutanoate-binding positions include 45 to 46, Asp-84, and Lys-112; that span reads DS. Mg(2+) is bound at residue Glu-114. Glu-181 functions as the Proton acceptor in the catalytic mechanism.

It belongs to the PanB family. Homodecamer; pentamer of dimers. It depends on Mg(2+) as a cofactor.

Its subcellular location is the cytoplasm. It carries out the reaction 3-methyl-2-oxobutanoate + (6R)-5,10-methylene-5,6,7,8-tetrahydrofolate + H2O = 2-dehydropantoate + (6S)-5,6,7,8-tetrahydrofolate. Its pathway is cofactor biosynthesis; (R)-pantothenate biosynthesis; (R)-pantoate from 3-methyl-2-oxobutanoate: step 1/2. Functionally, catalyzes the reversible reaction in which hydroxymethyl group from 5,10-methylenetetrahydrofolate is transferred onto alpha-ketoisovalerate to form ketopantoate. The polypeptide is 3-methyl-2-oxobutanoate hydroxymethyltransferase (Pseudomonas fluorescens (strain SBW25)).